The primary structure comprises 518 residues: Hyccin (518 aa).

2 disordered regions span residues 385 to 410 and 466 to 492; these read GLRRLTGRSSKEKDKEKDAATGMDQL and VFSGNQPSSRASSPTSNHVAEQDEGVA. Residues 393 to 403 show a composition bias toward basic and acidic residues; that stretch reads SSKEKDKEKDA. The span at 466–484 shows a compositional bias: polar residues; it reads VFSGNQPSSRASSPTSNHV.

Belongs to the Hyccin family. Component of a phosphatidylinositol 4-kinase (PI4K) complex.

The protein localises to the cytoplasm. It localises to the cytosol. The protein resides in the cell membrane. Its function is as follows. Component of a complex required to localize phosphatidylinositol 4-kinase (PI4K) to the plasma membrane. The complex acts as a regulator of phosphatidylinositol 4-phosphate (PtdIns(4)P) synthesis. The polypeptide is Hyccin (hycc1) (Danio rerio (Zebrafish)).